The primary structure comprises 576 residues: 4-alpha-glucanotransferase, chloroplastic/amyloplastic (576 aa).

Residues 1 to 52 constitute a chloroplast transit peptide; it reads MAIHTCFSLIPSSFSSPKLPYPKNTTFQSPIPKLSRPTFMFDRKGSFQNGTA.

It belongs to the disproportionating enzyme family. In terms of tissue distribution, present in leaves, stems, roots, and stolons but is most abundant in developing and mature tubers.

The protein resides in the plastid. The protein localises to the chloroplast. It is found in the amyloplast. It carries out the reaction Transfers a segment of a (1-&gt;4)-alpha-D-glucan to a new position in an acceptor, which may be glucose or a (1-&gt;4)-alpha-D-glucan.. May act during starch breakdown to convert small oligosaccharides into larger molecules upon which starch phosphorylase can act, or may change the structure of starch molecules and grain architecture by modifying chain length, or may generate from starch and glucose oligosaccharides which can serve either as primers for new starch phosphoenzyme. This is 4-alpha-glucanotransferase, chloroplastic/amyloplastic (DPEP) from Solanum tuberosum (Potato).